The chain runs to 220 residues: Deoxyribose-phosphate aldolase (220 aa).

Residue D89 is the Proton donor/acceptor of the active site. Catalysis depends on K151, which acts as the Schiff-base intermediate with acetaldehyde. The active-site Proton donor/acceptor is the K180.

Belongs to the DeoC/FbaB aldolase family. DeoC type 1 subfamily.

It localises to the cytoplasm. It catalyses the reaction 2-deoxy-D-ribose 5-phosphate = D-glyceraldehyde 3-phosphate + acetaldehyde. It functions in the pathway carbohydrate degradation; 2-deoxy-D-ribose 1-phosphate degradation; D-glyceraldehyde 3-phosphate and acetaldehyde from 2-deoxy-alpha-D-ribose 1-phosphate: step 2/2. Functionally, catalyzes a reversible aldol reaction between acetaldehyde and D-glyceraldehyde 3-phosphate to generate 2-deoxy-D-ribose 5-phosphate. In Staphylococcus carnosus (strain TM300), this protein is Deoxyribose-phosphate aldolase.